Consider the following 193-residue polypeptide: MANILFLDNFDSFTYNLVDQFRVLGHNVTIYRNDCDLEKLVETALNTPDTILALSPGPGTPSEAGILLPLIERLKNQVPIIGVCLGHQALIQAFGGKVVHAGEVLHGKVSRISHDNEAMFKDLANPMPVARYHSLMGQDLPKEFIVNAEYNGIIMAIRHRDLPICAFQFHPESILTVQGSQLLQQSIEWLLNR.

The region spanning 3–193 (NILFLDNFDS…QQSIEWLLNR (191 aa)) is the Glutamine amidotransferase type-1 domain. 57–59 (GPG) contacts L-glutamine. Catalysis depends on Cys84, which acts as the Nucleophile; for GATase activity. Residues Gln88 and 134-135 (SL) each bind L-glutamine. Catalysis depends on for GATase activity residues His170 and Glu172.

Heterotetramer consisting of two non-identical subunits: a beta subunit (TrpG) and a large alpha subunit (TrpE).

It carries out the reaction chorismate + L-glutamine = anthranilate + pyruvate + L-glutamate + H(+). Its pathway is amino-acid biosynthesis; L-tryptophan biosynthesis; L-tryptophan from chorismate: step 1/5. Its function is as follows. Part of a heterotetrameric complex that catalyzes the two-step biosynthesis of anthranilate, an intermediate in the biosynthesis of L-tryptophan. In the first step, the glutamine-binding beta subunit (TrpG) of anthranilate synthase (AS) provides the glutamine amidotransferase activity which generates ammonia as a substrate that, along with chorismate, is used in the second step, catalyzed by the large alpha subunit of AS (TrpE) to produce anthranilate. In the absence of TrpG, TrpE can synthesize anthranilate directly from chorismate and high concentrations of ammonia. In Haemophilus influenzae (strain ATCC 51907 / DSM 11121 / KW20 / Rd), this protein is Anthranilate synthase component 2 (trpG).